We begin with the raw amino-acid sequence, 294 residues long: ATP synthase gamma chain (294 aa).

This sequence belongs to the ATPase gamma chain family. In terms of assembly, F-type ATPases have 2 components, CF(1) - the catalytic core - and CF(0) - the membrane proton channel. CF(1) has five subunits: alpha(3), beta(3), gamma(1), delta(1), epsilon(1). CF(0) has three main subunits: a, b and c.

The protein localises to the cell inner membrane. In terms of biological role, produces ATP from ADP in the presence of a proton gradient across the membrane. The gamma chain is believed to be important in regulating ATPase activity and the flow of protons through the CF(0) complex. This chain is ATP synthase gamma chain, found in Nitrosomonas europaea (strain ATCC 19718 / CIP 103999 / KCTC 2705 / NBRC 14298).